Reading from the N-terminus, the 293-residue chain is MMRIALFLITNLAVMLVFGLVLSLTGIQSSSVQGLMIMAGLFGFGGAFVSLLMSKWMALRSVGGEVIEQPRNETERWLVETVRSQSQQAGIAMPQVAIYHAPDINAFATGARRDASLVAVSTGLLQNMSRDEAEAVIAHEISHIANGDMVTMTLVQGIVNTFVIFISRLIAQVVSGFLSGNRDEGESSNGNPMVYFAVATVLELVFGILASIITMWFSRYREFHADAGSAKLVGREKMIAALQRLKTSYEPQEEGSMMAFCINGKSKSFSELFMSHPPLDKRIEALRSGEYLK.

The next 2 membrane-spanning stretches (helical) occupy residues Ile4–Leu24 and Gly34–Ser54. Residue His139 participates in Zn(2+) binding. Glu140 is a catalytic residue. Residue His143 participates in Zn(2+) binding. 2 helical membrane-spanning segments follow: residues Ile158–Leu178 and Met193–Ile213. Glu222 provides a ligand contact to Zn(2+).

Belongs to the peptidase M48B family. Requires Zn(2+) as cofactor.

The protein resides in the cell inner membrane. The polypeptide is Protease HtpX (Pectobacterium atrosepticum (strain SCRI 1043 / ATCC BAA-672) (Erwinia carotovora subsp. atroseptica)).